A 747-amino-acid polypeptide reads, in one-letter code: H(+)/Cl(-) exchange transporter 4 (747 aa).

The segment at 1–50 is required for localization in the endoplasmic reticulum; sequence MDFLEEPFPDVGTYEDFHTIDWLREKSRDTDRHRKITSKSKESIWEFIKS. The Cytoplasmic portion of the chain corresponds to 1-54; sequence MDFLEEPFPDVGTYEDFHTIDWLREKSRDTDRHRKITSKSKESIWEFIKSLLDA. Helical transmembrane passes span 55–92 and 138–161; these read WSGW…VCLS and LNYL…VRVF. The Selectivity filter part_1 motif lies at 167 to 171; the sequence is GSGIP. Ser168 serves as a coordination point for chloride. Residues 170–177 constitute an intramembrane region (helical); the sequence is IPEIKTIL. Transmembrane regions (helical) follow at residues 187–205 and 211–230; these read GKWT…VSSG and EGPL…SLFS. The short motif at 209–213 is the Selectivity filter part_2 element; it reads GKEGP. 2 intramembrane regions (helical) span residues 242–254 and 258–266; these read VLSA…VSVA and PIGGVLFSL. The next 5 helical transmembrane spans lie at 278-296, 320-345, 352-372, 429-449, and 454-473; these read LWRS…RSIN, FPFI…AWCR, LGRY…IVAY, MWQL…TFGM, and GLFI…VGIG. The short motif at 454–458 is the Selectivity filter part_3 element; it reads GLFIP. Phe456 provides a ligand contact to chloride. 2 intramembrane regions (helical) span residues 501 to 515 and 519 to 530; these read GLYA…LGGV and TVSLVVIMFELT. An intramembrane region (note=Loop between two helices) is located at residues 531–534; the sequence is GGLE. A helical transmembrane segment spans residues 535–553; it reads YIVPLMAAAVTSKWVADAF. The Cytoplasmic portion of the chain corresponds to 554–747; that stretch reads GKEGIYEAHI…NQDPESIMFN (194 aa). Tyr559 contributes to the chloride binding site. CBS domains follow at residues 587 to 653 and 680 to 742; these read MRPR…QRQE and LRRI…QDPE. ATP contacts are provided by residues Ser597 and 618-620; that span reads YNG. The interval 654–683 is required for localization in the endoplasmic reticulum; that stretch reads GIVSNSIMYFTEEPPELPANSPHPLKLRRI. 725 to 728 contacts ATP; it reads TKKD.

The protein belongs to the chloride channel (TC 2.A.49) family. ClC-4/CLCN4 subfamily. As to expression, predominantly present in excitable tissues such as nervous system and skeletal muscle. Not detected in heart.

The protein resides in the early endosome membrane. It localises to the late endosome membrane. Its subcellular location is the endoplasmic reticulum membrane. It is found in the lysosome membrane. The protein localises to the recycling endosome membrane. In terms of biological role, strongly outwardly rectifying, electrogenic H(+)/Cl(-)exchanger which mediates the exchange of chloride ions against protons. The CLC channel family contains both chloride channels and proton-coupled anion transporters that exchange chloride or another anion for protons. The presence of conserved gating glutamate residues is typical for family members that function as antiporters. The protein is H(+)/Cl(-) exchange transporter 4 (Clcn4) of Mus musculus (Mouse).